A 122-amino-acid chain; its full sequence is Protein TCL1B3 (122 aa).

This sequence belongs to the TCL1 family.

This is Protein TCL1B3 (Tcl1b3) from Mus musculus (Mouse).